Reading from the N-terminus, the 334-residue chain is N-acetyl-gamma-glutamyl-phosphate reductase (334 aa).

The active site involves Cys-154.

The protein belongs to the NAGSA dehydrogenase family. Type 1 subfamily.

Its subcellular location is the cytoplasm. It catalyses the reaction N-acetyl-L-glutamate 5-semialdehyde + phosphate + NADP(+) = N-acetyl-L-glutamyl 5-phosphate + NADPH + H(+). Its pathway is amino-acid biosynthesis; L-arginine biosynthesis; N(2)-acetyl-L-ornithine from L-glutamate: step 3/4. In terms of biological role, catalyzes the NADPH-dependent reduction of N-acetyl-5-glutamyl phosphate to yield N-acetyl-L-glutamate 5-semialdehyde. The protein is N-acetyl-gamma-glutamyl-phosphate reductase of Yersinia pestis.